We begin with the raw amino-acid sequence, 347 residues long: UPF0284 protein YN1551_0030 (347 aa).

This sequence belongs to the UPF0284 family.

In Saccharolobus islandicus (strain Y.N.15.51 / Yellowstone #2) (Sulfolobus islandicus), this protein is UPF0284 protein YN1551_0030.